The following is a 452-amino-acid chain: Probable dihydrolipoyllysine-residue succinyltransferase component of 2-oxoglutarate dehydrogenase complex, mitochondrial (452 aa).

Residues 42–117 (STRIKTPPFP…TIDQDIAVID (76 aa)) enclose the Lipoyl-binding domain. Lysine 83 carries the post-translational modification N6-lipoyllysine. The tract at residues 119–225 (SAAPPEGGSA…FSRNEDRVKM (107 aa)) is disordered. Basic and acidic residues-rich tracts occupy residues 130-144 (PKKDEVKTADADAAK), 154-170 (KPIEEKPMPDLGAEQKE), and 195-209 (AKSEPVKQSKPKATE). Residues histidine 424 and aspartate 428 contribute to the active site.

Belongs to the 2-oxoacid dehydrogenase family. (R)-lipoate is required as a cofactor.

It is found in the mitochondrion. The catalysed reaction is N(6)-[(R)-dihydrolipoyl]-L-lysyl-[protein] + succinyl-CoA = N(6)-[(R)-S(8)-succinyldihydrolipoyl]-L-lysyl-[protein] + CoA. Its pathway is amino-acid degradation; L-lysine degradation via saccharopine pathway; glutaryl-CoA from L-lysine: step 6/6. Its function is as follows. The 2-oxoglutarate dehydrogenase complex catalyzes the overall conversion of 2-oxoglutarate to succinyl-CoA and CO(2). It contains multiple copies of three enzymatic components: 2-oxoglutarate dehydrogenase (E1), dihydrolipoamide succinyltransferase (E2) and lipoamide dehydrogenase (E3). This is Probable dihydrolipoyllysine-residue succinyltransferase component of 2-oxoglutarate dehydrogenase complex, mitochondrial (kgd2) from Schizosaccharomyces pombe (strain 972 / ATCC 24843) (Fission yeast).